Here is a 1265-residue protein sequence, read N- to C-terminus: DNA-directed RNA polymerase subunit beta'' (1265 aa).

Zn(2+)-binding residues include cysteine 223, cysteine 297, cysteine 304, and cysteine 307.

Belongs to the RNA polymerase beta' chain family. RpoC2 subfamily. In terms of assembly, in plastids the minimal PEP RNA polymerase catalytic core is composed of four subunits: alpha, beta, beta', and beta''. When a (nuclear-encoded) sigma factor is associated with the core the holoenzyme is formed, which can initiate transcription. The cofactor is Zn(2+).

It localises to the plastid. Its subcellular location is the cyanelle. It carries out the reaction RNA(n) + a ribonucleoside 5'-triphosphate = RNA(n+1) + diphosphate. In terms of biological role, DNA-dependent RNA polymerase catalyzes the transcription of DNA into RNA using the four ribonucleoside triphosphates as substrates. The chain is DNA-directed RNA polymerase subunit beta'' from Cyanophora paradoxa.